The chain runs to 209 residues: Probable GTP-binding protein EngB (209 aa).

The EngB-type G domain occupies 27 to 201; it reads SGVEIAFAGR…ATKLDSWFAE (175 aa). GTP contacts are provided by residues 35-42, 62-66, 80-83, 147-150, and 180-182; these read GRSNAGKS, GRTQL, DLPG, TKAD, and YSA. Mg(2+) contacts are provided by Ser42 and Thr64.

Belongs to the TRAFAC class TrmE-Era-EngA-EngB-Septin-like GTPase superfamily. EngB GTPase family. It depends on Mg(2+) as a cofactor.

Necessary for normal cell division and for the maintenance of normal septation. The chain is Probable GTP-binding protein EngB from Glaesserella parasuis serovar 5 (strain SH0165) (Haemophilus parasuis).